The following is a 509-amino-acid chain: Probable cation transporter HKT2;3 (509 aa).

The Cytoplasmic portion of the chain corresponds to 1 to 32 (MPIRLHIFVNSARHAINSSAFICRFIAYHLSP). A run of 2 helical transmembrane segments spans residues 33-53 (LLIHLSYFLIIDILGFVSLVV) and 96-116 (ILTLLMFLDSKMFLSFLGLVL). Topologically, residues 117–164 (ESSKQNKHDPENRRVSSVTVCKQSQLEEATPQTPSMNSIDIKKRCLKY) are cytoplasmic. Transmembrane regions (helical) follow at residues 165-185 (LVFVVLAYMIIILVTGSLLVF) and 237-257 (GLLLLLIGQILAGSTLFPVFL). The Cytoplasmic portion of the chain corresponds to 258–296 (RLVIWALRGLRLAKAEEPDFMMNNSSAVGFSHLLPNLQT). 2 consecutive transmembrane segments (helical) span residues 297 to 317 (IFLAVVEVAFVAMTVILFCCL) and 353 to 373 (CSLVAPAALVLFMVMMYTPSL). At 374–400 (TKLFSACQDHKRIGPESDDRTSKGKPF) the chain is on the cytoplasmic side. Transmembrane regions (helical) follow at residues 401 to 421 (LKMMAFSPLGFNTTVIMLVCI) and 474 to 494 (AYNFSGWWSEPGKLILVLAML). Residues 495–509 (CGRLNSKDSTSARTR) lie on the Cytoplasmic side of the membrane.

This sequence belongs to the TrkH potassium transport family. HKT (TC 2.A.38.3) subfamily.

The protein resides in the membrane. In terms of biological role, probable cation transporter. May be involved in regulation of potassium-sodium homeostasis. This Oryza sativa subsp. japonica (Rice) protein is Probable cation transporter HKT2;3.